A 140-amino-acid chain; its full sequence is Profilin (140 aa).

An N-acetylserine modification is found at Ser-2.

The protein belongs to the profilin family. Occurs in many kinds of cells as a complex with monomeric actin in a 1:1 ratio.

The protein resides in the cytoplasm. It localises to the cytoskeleton. Binds to actin and affects the structure of the cytoskeleton. At high concentrations, profilin prevents the polymerization of actin, whereas it enhances it at low concentrations. By binding to PIP2, it inhibits the formation of IP3 and DG. The chain is Profilin from Clypeaster japonicus (Sand dollar).